The following is a 204-amino-acid chain: Large ribosomal subunit protein bL25 (204 aa).

The protein belongs to the bacterial ribosomal protein bL25 family. CTC subfamily. As to quaternary structure, part of the 50S ribosomal subunit; part of the 5S rRNA/L5/L18/L25 subcomplex. Contacts the 5S rRNA. Binds to the 5S rRNA independently of L5 and L18.

Functionally, this is one of the proteins that binds to the 5S RNA in the ribosome where it forms part of the central protuberance. The polypeptide is Large ribosomal subunit protein bL25 (Bordetella bronchiseptica (strain ATCC BAA-588 / NCTC 13252 / RB50) (Alcaligenes bronchisepticus)).